A 211-amino-acid polypeptide reads, in one-letter code: UPF0637 protein BLi01683/BL05149 (211 aa).

The protein belongs to the UPF0637 family.

This is UPF0637 protein BLi01683/BL05149 from Bacillus licheniformis (strain ATCC 14580 / DSM 13 / JCM 2505 / CCUG 7422 / NBRC 12200 / NCIMB 9375 / NCTC 10341 / NRRL NRS-1264 / Gibson 46).